The sequence spans 223 residues: Pyridoxine/pyridoxamine 5'-phosphate oxidase (223 aa).

Residues 9 to 12 (RVGY) and Lys76 each bind substrate. FMN contacts are provided by residues 71 to 76 (RTVLCK), 86 to 87 (FT), Lys93, and Gln115. Substrate is bound by residues Tyr133, Arg137, and Ser141. Residues 150–151 (QS) and Trp196 each bind FMN. Position 202–204 (202–204 (RMH)) interacts with substrate. Arg206 contacts FMN.

Belongs to the pyridoxamine 5'-phosphate oxidase family. In terms of assembly, homodimer. FMN is required as a cofactor.

It carries out the reaction pyridoxamine 5'-phosphate + O2 + H2O = pyridoxal 5'-phosphate + H2O2 + NH4(+). The catalysed reaction is pyridoxine 5'-phosphate + O2 = pyridoxal 5'-phosphate + H2O2. It participates in cofactor metabolism; pyridoxal 5'-phosphate salvage; pyridoxal 5'-phosphate from pyridoxamine 5'-phosphate: step 1/1. Its pathway is cofactor metabolism; pyridoxal 5'-phosphate salvage; pyridoxal 5'-phosphate from pyridoxine 5'-phosphate: step 1/1. In terms of biological role, catalyzes the oxidation of either pyridoxine 5'-phosphate (PNP) or pyridoxamine 5'-phosphate (PMP) into pyridoxal 5'-phosphate (PLP). In Rhodococcus jostii (strain RHA1), this protein is Pyridoxine/pyridoxamine 5'-phosphate oxidase.